The following is a 95-amino-acid chain: Integration host factor subunit alpha (95 aa).

The disordered stretch occupies residues 51–71; the sequence is NFDLRDKNERPGRNPKTGEDI. Residues 53 to 69 are compositionally biased toward basic and acidic residues; it reads DLRDKNERPGRNPKTGE.

Belongs to the bacterial histone-like protein family. Heterodimer of an alpha and a beta chain.

This protein is one of the two subunits of integration host factor, a specific DNA-binding protein that functions in genetic recombination as well as in transcriptional and translational control. This chain is Integration host factor subunit alpha, found in Vibrio vulnificus (strain CMCP6).